Reading from the N-terminus, the 343-residue chain is Probable dual-specificity RNA methyltransferase RlmN (343 aa).

The active-site Proton acceptor is glutamate 91. In terms of domain architecture, Radical SAM core spans 97-327; the sequence is YKHGNSICVS…TTIRREMGSD (231 aa). Residues cysteine 104 and cysteine 332 are joined by a disulfide bond. [4Fe-4S] cluster-binding residues include cysteine 111, cysteine 115, and cysteine 118. S-adenosyl-L-methionine contacts are provided by residues 158-159, serine 190, 213-215, and asparagine 289; these read GE and SLH. Residue cysteine 332 is the S-methylcysteine intermediate of the active site.

It belongs to the radical SAM superfamily. RlmN family. [4Fe-4S] cluster is required as a cofactor.

The protein resides in the cytoplasm. It carries out the reaction adenosine(2503) in 23S rRNA + 2 reduced [2Fe-2S]-[ferredoxin] + 2 S-adenosyl-L-methionine = 2-methyladenosine(2503) in 23S rRNA + 5'-deoxyadenosine + L-methionine + 2 oxidized [2Fe-2S]-[ferredoxin] + S-adenosyl-L-homocysteine. The catalysed reaction is adenosine(37) in tRNA + 2 reduced [2Fe-2S]-[ferredoxin] + 2 S-adenosyl-L-methionine = 2-methyladenosine(37) in tRNA + 5'-deoxyadenosine + L-methionine + 2 oxidized [2Fe-2S]-[ferredoxin] + S-adenosyl-L-homocysteine. Specifically methylates position 2 of adenine 2503 in 23S rRNA and position 2 of adenine 37 in tRNAs. This chain is Probable dual-specificity RNA methyltransferase RlmN, found in Clostridium novyi (strain NT).